The primary structure comprises 60 residues: UPF0434 protein KPK_3615 (60 aa).

Belongs to the UPF0434 family.

The protein is UPF0434 protein KPK_3615 of Klebsiella pneumoniae (strain 342).